The sequence spans 671 residues: Acetyl-coenzyme A synthetase (671 aa).

Residues 1–21 form a disordered region; that stretch reads MPTASASESSSNQPESSNASG. CoA contacts are provided by residues 221 to 224, Thr-339, and Asn-363; that span reads RRGK. ATP-binding positions include 415-417, 439-444, Asp-528, and Arg-543; these read GEG and DTWWQT. Residue Ser-551 participates in CoA binding. Residue Arg-554 coordinates ATP. Residues Val-565, His-567, and Val-570 each contribute to the Mg(2+) site. Residue Arg-611 coordinates CoA. N6-acetyllysine is present on Lys-636.

The protein belongs to the ATP-dependent AMP-binding enzyme family. Mg(2+) is required as a cofactor. Post-translationally, acetylated. Deacetylation by the SIR2-homolog deacetylase activates the enzyme.

The catalysed reaction is acetate + ATP + CoA = acetyl-CoA + AMP + diphosphate. In terms of biological role, catalyzes the conversion of acetate into acetyl-CoA (AcCoA), an essential intermediate at the junction of anabolic and catabolic pathways. AcsA undergoes a two-step reaction. In the first half reaction, AcsA combines acetate with ATP to form acetyl-adenylate (AcAMP) intermediate. In the second half reaction, it can then transfer the acetyl group from AcAMP to the sulfhydryl group of CoA, forming the product AcCoA. The sequence is that of Acetyl-coenzyme A synthetase from Rhodopirellula baltica (strain DSM 10527 / NCIMB 13988 / SH1).